The following is a 347-amino-acid chain: Dihydroorotase (347 aa).

Zn(2+)-binding residues include H14 and H16. Substrate is bound by residues 16-18 (HLR) and N42. Positions 100, 137, and 175 each coordinate Zn(2+). Position 100 is an N6-carboxylysine (K100). H137 contacts substrate. L220 contacts substrate. A Zn(2+)-binding site is contributed by D248. Residue D248 is part of the active site. Residues H252 and A264 each coordinate substrate.

This sequence belongs to the metallo-dependent hydrolases superfamily. DHOase family. Class II DHOase subfamily. In terms of assembly, homodimer. Zn(2+) serves as cofactor.

The catalysed reaction is (S)-dihydroorotate + H2O = N-carbamoyl-L-aspartate + H(+). Its pathway is pyrimidine metabolism; UMP biosynthesis via de novo pathway; (S)-dihydroorotate from bicarbonate: step 3/3. In terms of biological role, catalyzes the reversible cyclization of carbamoyl aspartate to dihydroorotate. This chain is Dihydroorotase, found in Pseudomonas savastanoi pv. phaseolicola (strain 1448A / Race 6) (Pseudomonas syringae pv. phaseolicola (strain 1448A / Race 6)).